The chain runs to 260 residues: uncharacterized protein (260 aa).

Positions 1-38 (MNWTREIEQYKQVVASYKLKMKRMEMKISDISEEKRQS) form a coiled coil.

This is an uncharacterized protein from Caenorhabditis elegans.